Here is a 189-residue protein sequence, read N- to C-terminus: GTPase NRas (189 aa).

10–17 is a binding site for GTP; the sequence is GAGGVGKS. An Effector region motif is present at residues 32–40; that stretch reads YDPTIEDSY. Residues 57–61 and 116–119 contribute to the GTP site; these read DTAGQ and NKCD. Residues 166-185 form a hypervariable region region; the sequence is YRMKKLNSNEDGNQGCMGLS. Cys181 carries the S-palmitoyl cysteine lipid modification. Cys186 carries the S-farnesyl cysteine lipid modification. Residues 187 to 189 constitute a propeptide, removed in mature form; that stretch reads IVM.

Belongs to the small GTPase superfamily. Ras family. In terms of processing, palmitoylated by the ZDHHC9-GOLGA7 complex. Depalmitoylated by ABHD17A, ABHD17B and ABHD17C. A continuous cycle of de- and re-palmitoylation regulates rapid exchange between plasma membrane and Golgi.

The protein localises to the cell membrane. Its subcellular location is the golgi apparatus membrane. The enzyme catalyses GTP + H2O = GDP + phosphate + H(+). Its activity is regulated as follows. Alternates between an inactive form bound to GDP and an active form bound to GTP. Activated by a guanine nucleotide-exchange factor (GEF) and inactivated by a GTPase-activating protein (GAP). In terms of biological role, ras proteins bind GDP/GTP and possess intrinsic GTPase activity. The chain is GTPase NRas (NRAS) from Gallus gallus (Chicken).